A 629-amino-acid polypeptide reads, in one-letter code: DNA-directed RNA polymerase subunit beta' (629 aa).

Residues C70, C72, C85, and C88 each coordinate Zn(2+). Mg(2+) is bound by residues D472, D474, and D476.

This sequence belongs to the RNA polymerase beta' chain family. RpoC1 subfamily. In terms of assembly, in plastids the minimal PEP RNA polymerase catalytic core is composed of four subunits: alpha, beta, beta', and beta''. When a (nuclear-encoded) sigma factor is associated with the core the holoenzyme is formed, which can initiate transcription. Requires Mg(2+) as cofactor. Zn(2+) serves as cofactor.

It localises to the plastid. Its subcellular location is the chloroplast. It catalyses the reaction RNA(n) + a ribonucleoside 5'-triphosphate = RNA(n+1) + diphosphate. In terms of biological role, DNA-dependent RNA polymerase catalyzes the transcription of DNA into RNA using the four ribonucleoside triphosphates as substrates. This is DNA-directed RNA polymerase subunit beta' from Pyropia yezoensis (Susabi-nori).